The following is a 447-amino-acid chain: tRNA-2-methylthio-N(6)-dimethylallyladenosine synthase (447 aa).

The region spanning 1–116 is the MTTase N-terminal domain; the sequence is MYIRTFGCQM…LPDLIKRRRA (116 aa). Cys-8, Cys-45, Cys-79, Cys-153, Cys-157, and Cys-160 together coordinate [4Fe-4S] cluster. Residues 139 to 372 enclose the Radical SAM core domain; the sequence is RVDGATAFVS…QALINQQAAA (234 aa). A TRAM domain is found at 375 to 438; it reads QGMIGTRQRV…TNSLRGRVAG (64 aa).

This sequence belongs to the methylthiotransferase family. MiaB subfamily. In terms of assembly, monomer. The cofactor is [4Fe-4S] cluster.

Its subcellular location is the cytoplasm. It carries out the reaction N(6)-dimethylallyladenosine(37) in tRNA + (sulfur carrier)-SH + AH2 + 2 S-adenosyl-L-methionine = 2-methylsulfanyl-N(6)-dimethylallyladenosine(37) in tRNA + (sulfur carrier)-H + 5'-deoxyadenosine + L-methionine + A + S-adenosyl-L-homocysteine + 2 H(+). Functionally, catalyzes the methylthiolation of N6-(dimethylallyl)adenosine (i(6)A), leading to the formation of 2-methylthio-N6-(dimethylallyl)adenosine (ms(2)i(6)A) at position 37 in tRNAs that read codons beginning with uridine. This Bordetella pertussis (strain Tohama I / ATCC BAA-589 / NCTC 13251) protein is tRNA-2-methylthio-N(6)-dimethylallyladenosine synthase.